Here is a 277-residue protein sequence, read N- to C-terminus: Diaminopimelate epimerase (277 aa).

Substrate-binding residues include Asn13, Gln46, and Asn66. Cys75 serves as the catalytic Proton donor. Substrate-binding positions include 76–77 (GN), Asn159, Asn192, and 210–211 (ER). The Proton acceptor role is filled by Cys219. Residue 220-221 (GT) participates in substrate binding.

Belongs to the diaminopimelate epimerase family. Homodimer.

The protein resides in the cytoplasm. The catalysed reaction is (2S,6S)-2,6-diaminopimelate = meso-2,6-diaminopimelate. It participates in amino-acid biosynthesis; L-lysine biosynthesis via DAP pathway; DL-2,6-diaminopimelate from LL-2,6-diaminopimelate: step 1/1. Functionally, catalyzes the stereoinversion of LL-2,6-diaminopimelate (L,L-DAP) to meso-diaminopimelate (meso-DAP), a precursor of L-lysine and an essential component of the bacterial peptidoglycan. The polypeptide is Diaminopimelate epimerase (Azoarcus sp. (strain BH72)).